The primary structure comprises 426 residues: 3-phosphoshikimate 1-carboxyvinyltransferase (426 aa).

3-phosphoshikimate is bound by residues Lys-22, Ser-23, and Arg-27. Lys-22 contributes to the phosphoenolpyruvate binding site. Residues Gly-96 and Arg-124 each contribute to the phosphoenolpyruvate site. Ser-170, Ser-171, Gln-172, Ser-198, Asp-314, Asn-337, and Lys-341 together coordinate 3-phosphoshikimate. Gln-172 provides a ligand contact to phosphoenolpyruvate. Catalysis depends on Asp-314, which acts as the Proton acceptor. Residues Arg-345, Arg-387, and Lys-412 each contribute to the phosphoenolpyruvate site.

Belongs to the EPSP synthase family. As to quaternary structure, monomer.

Its subcellular location is the cytoplasm. It carries out the reaction 3-phosphoshikimate + phosphoenolpyruvate = 5-O-(1-carboxyvinyl)-3-phosphoshikimate + phosphate. The protein operates within metabolic intermediate biosynthesis; chorismate biosynthesis; chorismate from D-erythrose 4-phosphate and phosphoenolpyruvate: step 6/7. Its function is as follows. Catalyzes the transfer of the enolpyruvyl moiety of phosphoenolpyruvate (PEP) to the 5-hydroxyl of shikimate-3-phosphate (S3P) to produce enolpyruvyl shikimate-3-phosphate and inorganic phosphate. The sequence is that of 3-phosphoshikimate 1-carboxyvinyltransferase from Shewanella sp. (strain ANA-3).